The chain runs to 168 residues: MGRAFYIGRFQPYHYGHQSVLKRIAETADEIIIGIGSAQLSHEVNNPFTAGERVLMITRALAHLDCPYYVIPIEDIQRNALWVAHVRSMTPPFDRVYSSNPLVVRLFAEVGISVESPSMYERETHCGTAIRELMLNGEPWEDRVPPAVVSVIREIDGVERLQQIAGSD.

It belongs to the archaeal NMN adenylyltransferase family.

The protein localises to the cytoplasm. The enzyme catalyses beta-nicotinamide D-ribonucleotide + ATP + H(+) = diphosphate + NAD(+). It participates in cofactor biosynthesis; NAD(+) biosynthesis; NAD(+) from nicotinamide D-ribonucleotide: step 1/1. This Methanosphaerula palustris (strain ATCC BAA-1556 / DSM 19958 / E1-9c) protein is Nicotinamide-nucleotide adenylyltransferase.